A 558-amino-acid polypeptide reads, in one-letter code: 2-isopropylmalate synthase (558 aa).

The Pyruvate carboxyltransferase domain occupies 30–303; that stretch reads PIWCSVDLRD…DPKLDCSDIE (274 aa). Residues Asp39, His242, His244, and Asn278 each coordinate Mg(2+). Residues 437–558 form a regulatory domain region; sequence QPGARIKFVD…ANRVLDVVGK (122 aa).

Belongs to the alpha-IPM synthase/homocitrate synthase family. LeuA type 2 subfamily. Homodimer. It depends on Mg(2+) as a cofactor.

It localises to the cytoplasm. The catalysed reaction is 3-methyl-2-oxobutanoate + acetyl-CoA + H2O = (2S)-2-isopropylmalate + CoA + H(+). The protein operates within amino-acid biosynthesis; L-leucine biosynthesis; L-leucine from 3-methyl-2-oxobutanoate: step 1/4. Functionally, catalyzes the condensation of the acetyl group of acetyl-CoA with 3-methyl-2-oxobutanoate (2-ketoisovalerate) to form 3-carboxy-3-hydroxy-4-methylpentanoate (2-isopropylmalate). This is 2-isopropylmalate synthase from Rhizobium meliloti (strain 1021) (Ensifer meliloti).